The following is a 202-amino-acid chain: Nucleoside triphosphate pyrophosphatase (202 aa).

The active-site Proton acceptor is Asp-79.

Belongs to the Maf family. It depends on a divalent metal cation as a cofactor.

Its subcellular location is the cytoplasm. It catalyses the reaction a ribonucleoside 5'-triphosphate + H2O = a ribonucleoside 5'-phosphate + diphosphate + H(+). The enzyme catalyses a 2'-deoxyribonucleoside 5'-triphosphate + H2O = a 2'-deoxyribonucleoside 5'-phosphate + diphosphate + H(+). Functionally, nucleoside triphosphate pyrophosphatase. May have a dual role in cell division arrest and in preventing the incorporation of modified nucleotides into cellular nucleic acids. The polypeptide is Nucleoside triphosphate pyrophosphatase (Rhodopseudomonas palustris (strain HaA2)).